We begin with the raw amino-acid sequence, 439 residues long: MDDKTKNDQQESNEDKDELELFTRNTSKKRRQRKRSKATHFSNQNKDDTSQQADFDEEIYLINKDFKKEESNDKNNDSASSHANDNNIDDSTDSNIENEDYRYNQEIDDQNESNVISVDNEQPQSAPKEQNSDSIDEETVTKKERKSKVTQLKPLTLEEKRKLRRKRQKRIQYSVITILVLLIAVILIYMFSPLSKIAHVNINGNNHVSTSKINKVLGVKNDSRMYTFSKKNAINDLEENPLIKSVEIHKQLPNTLNVDITENEIIALVKYKGKYLPLLENGKLLKGSNDVKINDAPVMDGFKGTKEDDMIKALSEMTPEVRRYIAEVTYAPSKNKQSRIELFTTDGLQVIGDISTISKKMKYYPQMSQSLSRDSSGKLKTRGYIDLSVGASFIPYRGNTSSQSESDKNVTKSSQEENQAKEELQSVLNKINKQSSKNN.

Disordered stretches follow at residues 1-96 (MDDK…DSNI) and 119-149 (DNEQ…KSKV). The Cytoplasmic segment spans residues 1–173 (MDDKTKNDQQ…RRKRQKRIQY (173 aa)). Acidic residues predominate over residues 11–20 (ESNEDKDELE). Residues 26–38 (TSKKRRQRKRSKA) show a composition bias toward basic residues. Basic and acidic residues predominate over residues 64 to 76 (KDFKKEESNDKNN). A compositionally biased stretch (low complexity) spans 77–86 (DSASSHANDN). Positions 87–96 (NIDDSTDSNI) are enriched in acidic residues. The span at 119-133 (DNEQPQSAPKEQNSD) shows a compositional bias: polar residues. The chain crosses the membrane as a helical span at residues 174–194 (SVITILVLLIAVILIYMFSPL). Residues 195–263 (SKIAHVNING…NTLNVDITEN (69 aa)) enclose the POTRA domain. Topologically, residues 195-439 (SKIAHVNING…KINKQSSKNN (245 aa)) are extracellular. Residues 396–439 (YRGNTSSQSESDKNVTKSSQEENQAKEELQSVLNKINKQSSKNN) are disordered. Residues 405–424 (ESDKNVTKSSQEENQAKEEL) are compositionally biased toward basic and acidic residues. Residues 426-439 (SVLNKINKQSSKNN) show a composition bias toward polar residues.

It belongs to the FtsQ/DivIB family. DivIB subfamily.

Its subcellular location is the cell membrane. Its function is as follows. Cell division protein that may be involved in stabilizing or promoting the assembly of the division complex. The protein is Cell division protein DivIB of Staphylococcus aureus (strain NCTC 8325 / PS 47).